The primary structure comprises 203 residues: Large ribosomal subunit protein uL18 (203 aa).

The protein belongs to the universal ribosomal protein uL18 family. As to quaternary structure, part of the 50S ribosomal subunit. Contacts the 5S and 23S rRNAs.

Functionally, this is one of the proteins that bind and probably mediate the attachment of the 5S RNA into the large ribosomal subunit, where it forms part of the central protuberance. This chain is Large ribosomal subunit protein uL18, found in Pyrococcus horikoshii (strain ATCC 700860 / DSM 12428 / JCM 9974 / NBRC 100139 / OT-3).